Consider the following 160-residue polypeptide: Troponin C, skeletal muscle (160 aa).

EF-hand domains follow at residues 15–50 (EMIAEFKAAFDMFDTDGGGDISTKELGTVMRMLGQN), 51–86 (PTREELDAIIEEVDEDGSGTIDFEEFLVMMVRQLKE), 91–126 (KSEEELAEFFRVFDKNGDGFIDREEFGEILRSSGEP), and 127–160 (VSEEEIDELMADGDKNNDGKIDFDEWLKMMENIQ). Ca(2+) contacts are provided by aspartate 28, aspartate 30, aspartate 34, glutamate 39, aspartate 64, aspartate 66, serine 68, threonine 70, glutamate 75, aspartate 104, asparagine 106, aspartate 108, glutamate 115, aspartate 140, asparagine 142, aspartate 144, lysine 146, and glutamate 151.

The protein belongs to the troponin C family.

In terms of biological role, troponin is the central regulatory protein of striated muscle contraction. Tn consists of three components: Tn-I which is the inhibitor of actomyosin ATPase, Tn-T which contains the binding EF-hand for tropomyosin and Tn-C. The binding of calcium to Tn-C abolishes the inhibitory action of Tn on actin filaments. This Anguilla anguilla (European freshwater eel) protein is Troponin C, skeletal muscle.